Reading from the N-terminus, the 158-residue chain is 6,7-dimethyl-8-ribityllumazine synthase (158 aa).

5-amino-6-(D-ribitylamino)uracil-binding positions include Phe24, 58 to 60, and 82 to 84; these read AFE and AVI. 87–88 contributes to the (2S)-2-hydroxy-3-oxobutyl phosphate binding site; sequence GT. The active-site Proton donor is the His90. A 5-amino-6-(D-ribitylamino)uracil-binding site is contributed by Phe115. A (2S)-2-hydroxy-3-oxobutyl phosphate-binding site is contributed by Arg129.

Belongs to the DMRL synthase family. As to quaternary structure, forms an icosahedral capsid composed of 60 subunits, arranged as a dodecamer of pentamers.

It catalyses the reaction (2S)-2-hydroxy-3-oxobutyl phosphate + 5-amino-6-(D-ribitylamino)uracil = 6,7-dimethyl-8-(1-D-ribityl)lumazine + phosphate + 2 H2O + H(+). The protein operates within cofactor biosynthesis; riboflavin biosynthesis; riboflavin from 2-hydroxy-3-oxobutyl phosphate and 5-amino-6-(D-ribitylamino)uracil: step 1/2. Catalyzes the formation of 6,7-dimethyl-8-ribityllumazine by condensation of 5-amino-6-(D-ribitylamino)uracil with 3,4-dihydroxy-2-butanone 4-phosphate. This is the penultimate step in the biosynthesis of riboflavin. This is 6,7-dimethyl-8-ribityllumazine synthase from Pseudomonas putida (strain GB-1).